A 471-amino-acid chain; its full sequence is ATP synthase subunit beta (471 aa).

156–163 (GGAGVGKT) lines the ATP pocket.

Belongs to the ATPase alpha/beta chains family. In terms of assembly, F-type ATPases have 2 components, CF(1) - the catalytic core - and CF(0) - the membrane proton channel. CF(1) has five subunits: alpha(3), beta(3), gamma(1), delta(1), epsilon(1). CF(0) has three main subunits: a(1), b(2) and c(9-12). The alpha and beta chains form an alternating ring which encloses part of the gamma chain. CF(1) is attached to CF(0) by a central stalk formed by the gamma and epsilon chains, while a peripheral stalk is formed by the delta and b chains.

Its subcellular location is the cell inner membrane. The enzyme catalyses ATP + H2O + 4 H(+)(in) = ADP + phosphate + 5 H(+)(out). Produces ATP from ADP in the presence of a proton gradient across the membrane. The catalytic sites are hosted primarily by the beta subunits. In Nitratidesulfovibrio vulgaris (strain DSM 19637 / Miyazaki F) (Desulfovibrio vulgaris), this protein is ATP synthase subunit beta.